Here is a 240-residue protein sequence, read N- to C-terminus: 3-dehydroquinate dehydratase (240 aa).

3-dehydroquinate is bound by residues Ser-15, 42-44, and Arg-73; that span reads EWR. Residue His-132 is the Proton donor/acceptor of the active site. The active-site Schiff-base intermediate with substrate is Lys-160. Positions 202, 221, and 225 each coordinate 3-dehydroquinate.

It belongs to the type-I 3-dehydroquinase family. In terms of assembly, homodimer.

It carries out the reaction 3-dehydroquinate = 3-dehydroshikimate + H2O. The protein operates within metabolic intermediate biosynthesis; chorismate biosynthesis; chorismate from D-erythrose 4-phosphate and phosphoenolpyruvate: step 3/7. Involved in the third step of the chorismate pathway, which leads to the biosynthesis of aromatic amino acids. Catalyzes the cis-dehydration of 3-dehydroquinate (DHQ) and introduces the first double bond of the aromatic ring to yield 3-dehydroshikimate. This chain is 3-dehydroquinate dehydratase, found in Latilactobacillus sakei subsp. sakei (strain 23K) (Lactobacillus sakei subsp. sakei).